The primary structure comprises 122 residues: Large ribosomal subunit protein uL14c (122 aa).

The protein belongs to the universal ribosomal protein uL14 family. As to quaternary structure, part of the 50S ribosomal subunit.

Its subcellular location is the plastid. The protein localises to the chloroplast. Functionally, binds to 23S rRNA. In Liriodendron tulipifera (Tuliptree), this protein is Large ribosomal subunit protein uL14c.